The chain runs to 122 residues: Large ribosomal subunit protein uL14c (122 aa).

This sequence belongs to the universal ribosomal protein uL14 family. In terms of assembly, part of the 50S ribosomal subunit.

The protein localises to the plastid. It is found in the chloroplast. Functionally, binds to 23S rRNA. The sequence is that of Large ribosomal subunit protein uL14c from Psilotum nudum (Whisk fern).